Reading from the N-terminus, the 574-residue chain is Splicing factor U2af large subunit A (574 aa).

Positions 1–180 (MAEHEEQPYE…SKRVSGFDQG (180 aa)) are disordered. Residues 18-41 (PAPASAYAEYPAPEGSPPAAAAKP) show a composition bias toward low complexity. Residues 53-143 (RSQHETQPHD…ERRRDRDRDG (91 aa)) show a composition bias toward basic and acidic residues. Residues 144–172 (HRRHRSRSRSPSKGRDRRSRSRSRSRSSK) show a composition bias toward basic residues. 3 consecutive RRM domains span residues 238–321 (RRVY…RPTD), 358–436 (DRIF…RANQ), and 479–565 (QVVS…YPED).

Belongs to the splicing factor SR family.

It is found in the nucleus. In terms of biological role, necessary for the splicing of pre-mRNA. The sequence is that of Splicing factor U2af large subunit A (U2AF65A) from Oryza sativa subsp. japonica (Rice).